Reading from the N-terminus, the 508-residue chain is Protein S-acyltransferase 18 (508 aa).

Transmembrane regions (helical) follow at residues 17-37 (IVGA…LGFF) and 42-62 (IAVI…IVLF). In terms of domain architecture, DHHC spans 158–208 (SYCSLCDLEVKRSSKHCRTCNRCVEGFDHHCRWLNNCVGKKNYTTFILLMV). The active-site S-palmitoyl cysteine intermediate is the cysteine 188. Helical transmembrane passes span 203–223 (FILL…TALA) and 250–270 (WALA…SAAM). The interval 443-468 (VSPGRFSSPRRRFSGSSSSTVPSPKQ) is disordered. Over residues 456-466 (SGSSSSTVPSP) the composition is skewed to low complexity.

Belongs to the DHHC palmitoyltransferase family.

It is found in the endoplasmic reticulum membrane. The protein localises to the cytoplasmic vesicle membrane. The enzyme catalyses L-cysteinyl-[protein] + hexadecanoyl-CoA = S-hexadecanoyl-L-cysteinyl-[protein] + CoA. Functionally, S-acyltransferase involved in protein lipid modification. The polypeptide is Protein S-acyltransferase 18 (PAT18) (Arabidopsis thaliana (Mouse-ear cress)).